The primary structure comprises 350 residues: Nicotinate-nucleotide--dimethylbenzimidazole phosphoribosyltransferase (350 aa).

E316 functions as the Proton acceptor in the catalytic mechanism.

This sequence belongs to the CobT family.

It catalyses the reaction 5,6-dimethylbenzimidazole + nicotinate beta-D-ribonucleotide = alpha-ribazole 5'-phosphate + nicotinate + H(+). It participates in nucleoside biosynthesis; alpha-ribazole biosynthesis; alpha-ribazole from 5,6-dimethylbenzimidazole: step 1/2. Its function is as follows. Catalyzes the synthesis of alpha-ribazole-5'-phosphate from nicotinate mononucleotide (NAMN) and 5,6-dimethylbenzimidazole (DMB). The sequence is that of Nicotinate-nucleotide--dimethylbenzimidazole phosphoribosyltransferase from Bradyrhizobium diazoefficiens (strain JCM 10833 / BCRC 13528 / IAM 13628 / NBRC 14792 / USDA 110).